The chain runs to 362 residues: Very-long-chain (3R)-3-hydroxyacyl-CoA dehydratase 3 (362 aa).

Met1 carries the N-acetylmethionine modification. The Cytoplasmic portion of the chain corresponds to 1-149; that stretch reads MENQVLTPHV…ETLTNLRKGY (149 aa). The 90-residue stretch at 5 to 94 folds into the CS domain; that stretch reads VLTPHVYWAQ…KVSQWWERLT (90 aa). Thr7 bears the Phosphothreonine mark. The stretch at 111–136 forms a coiled coil; sequence LDESDAEMELRAKEEERLNKLRLESE. A phosphoserine mark is found at Ser114 and Ser135. The helical transmembrane segment at 150–170 threads the bilayer; the sequence is LFMYNLVQFLGFSWIFVNLTV. Topologically, residues 171-185 are lumenal; sequence RFCILGKESFYDTFH. A helical membrane pass occupies residues 186–207; the sequence is TVADMMYFCQMLAVVETINAAI. Residues 208–217 lie on the Cytoplasmic side of the membrane; the sequence is GVTTSPVLPS. A helical transmembrane segment spans residues 218 to 235; it reads LIQLLGRNFILFIIFGTM. Over 236 to 241 the chain is Lumenal; it reads EEMQNK. The chain crosses the membrane as a helical span at residues 242 to 256; that stretch reads AVVFFVFYLWSAIEI. Residues 257-279 lie on the Cytoplasmic side of the membrane; that stretch reads FRYSFYMLTCIDMDWKVLTWLRY. Residues 280–298 form a helical membrane-spanning segment; it reads TLWIPLYPLGCLAEAVSVI. Residues Tyr286 and Glu293 contribute to the active site. At 299–322 the chain is on the lumenal side; it reads QSIPIFNETGRFSFTLPYPVKIKV. The helical transmembrane segment at 323 to 343 threads the bilayer; the sequence is RFSFFLQIYLIMIFLGLYINF. Residues 344–362 lie on the Cytoplasmic side of the membrane; sequence RHLYKQRRRRYGQKKKKIH.

This sequence belongs to the very long-chain fatty acids dehydratase HACD family. As to quaternary structure, may interact with enzymes of the ELO family (including ELOVL1); with those enzymes that mediate condensation, the first of the four steps of the reaction cycle responsible for fatty acids elongation, may be part of a larger fatty acids elongase complex. Interacts with RAC1. Associates with internalized insulin receptor/INSR complexes on Golgi/endosomal membranes; HACD3/PTPLAD1 together with ATIC and PRKAA2/AMPK2 is proposed to be part of a signaling network regulating INSR autophosphorylation and endocytosis. Highly expressed in testis, kidney, brain, liver and weakly in skeletal muscle, spleen and heart. No expression detected in leukocytes.

It is found in the endoplasmic reticulum membrane. The enzyme catalyses a very-long-chain (3R)-3-hydroxyacyl-CoA = a very-long-chain (2E)-enoyl-CoA + H2O. It catalyses the reaction (3R)-hydroxyhexadecanoyl-CoA = (2E)-hexadecenoyl-CoA + H2O. Its pathway is lipid metabolism; fatty acid biosynthesis. Its function is as follows. Catalyzes the third of the four reactions of the long-chain fatty acids elongation cycle. This endoplasmic reticulum-bound enzymatic process, allows the addition of two carbons to the chain of long- and very long-chain fatty acids/VLCFAs per cycle. This enzyme catalyzes the dehydration of the 3-hydroxyacyl-CoA intermediate into trans-2,3-enoyl-CoA, within each cycle of fatty acid elongation. Thereby, it participates in the production of VLCFAs of different chain lengths that are involved in multiple biological processes as precursors of membrane lipids and lipid mediators. May be involved in Rac1-signaling pathways leading to the modulation of gene expression. Promotes insulin receptor/INSR autophosphorylation and is involved in INSR internalization. The sequence is that of Very-long-chain (3R)-3-hydroxyacyl-CoA dehydratase 3 from Homo sapiens (Human).